A 575-amino-acid polypeptide reads, in one-letter code: Transcription factor COE2 (575 aa).

The interval 62-65 (RKSN) is interaction with DNA. Residues 150–169 (CRVLLTHEVMCSRCCEKKSC) form a C5-type zinc finger. Interaction with DNA regions lie at residues 196–203 (NCLKTAGN) and 235–238 (NNSK). Residues 253–336 (PCIKAISPSE…KGAPGRFIYT (84 aa)) enclose the IPT/TIG domain. The segment covering 441-453 (STQGNNQGYIRNT) has biased composition (polar residues). Positions 441 to 479 (STQGNNQGYIRNTSSISPRGYSSSSTPQQSNYSTSSNSM) are disordered. Residues 454–479 (SSISPRGYSSSSTPQQSNYSTSSNSM) show a composition bias toward low complexity.

The protein belongs to the COE family. As to quaternary structure, forms either a homodimer or a heterodimer with a related family member. Interacts with SIX1. As to expression, in adult expressed in olfactory epithelium and at a much lower level in Purkinje cells of the cerebellum. In embryo expressed in epithalamus, in cells near the ventricular zone of mesencephalon and on the ventral surface of rhombencephalon, in the developing vomeronasal organ, at a lower level in developing spinal cord. Not expressed in developing retina, inner ear, dorsal root ganglia, trigeminal ganglia and glossopharyngeal ganglia.

Its subcellular location is the nucleus. Its function is as follows. Transcription factor that, in osteoblasts, activates the decoy receptor for RANKL, TNFRSF11B, which in turn regulates osteoclast differentiation. Acts in synergy with the Wnt-responsive LEF1/CTNNB1 pathway. Recognizes variations of the palindromic sequence 5'-ATTCCCNNGGGAATT-3'. This is Transcription factor COE2 (Ebf2) from Mus musculus (Mouse).